The primary structure comprises 462 residues: Glycerol-3-phosphate acyltransferase ATS12, chloroplastic (462 aa).

Residues 1 to 82 (MFILSSSSST…DKESAQSAAT (82 aa)) constitute a chloroplast transit peptide. An HXXXXD motif motif is present at residues 233-238 (HQTEAD).

It belongs to the GPAT/DAPAT family.

Its subcellular location is the plastid. The protein localises to the chloroplast stroma. It catalyses the reaction a fatty acyl-[ACP] + sn-glycerol 3-phosphate = a 1-acyl-sn-glycero-3-phosphate + holo-[ACP]. The catalysed reaction is sn-glycerol 3-phosphate + an acyl-CoA = a 1-acyl-sn-glycero-3-phosphate + CoA. It functions in the pathway phospholipid metabolism; CDP-diacylglycerol biosynthesis; CDP-diacylglycerol from sn-glycerol 3-phosphate: step 1/3. Its function is as follows. Esterifies the acyl-group from acyl-acyl carrier proteins (acyl-ACPs) to the sn-1 position of glycerol-3-phosphate. The physiological acyl donors in chloroplasts are acyl-ACPs, but acyl-CoAs are used as artificial donor for in vitro reactions. The enzyme from chilling-resistant plants discriminates against non-fluid palmitic acid and selects oleic acid whereas the enzyme from sensitive plants accepts both fatty acids. Squash is chilling-sensitive. Does not seem to discriminate between the acyl-ACP thioesters 18:1-ACP, 18:0-ACP and 16:0-ACP. Exhibits higher selectivity for 16:0-CoA than 18:1-CoA in vitro. The sequence is that of Glycerol-3-phosphate acyltransferase ATS12, chloroplastic from Cucurbita moschata (Winter crookneck squash).